The following is a 474-amino-acid chain: tRNA-2-methylthio-N(6)-dimethylallyladenosine synthase (474 aa).

The region spanning 3–120 is the MTTase N-terminal domain; that stretch reads KKLHIKTWGC…LPEMIDQVQR (118 aa). The [4Fe-4S] cluster site is built by Cys12, Cys49, Cys83, Cys157, Cys161, and Cys164. The region spanning 143–375 is the Radical SAM core domain; that stretch reads RADGPTAFVS…QDRITQQAMR (233 aa). One can recognise a TRAM domain in the interval 378-441; the sequence is RQMLGTVQRI…TNSLRGIFIR (64 aa).

This sequence belongs to the methylthiotransferase family. MiaB subfamily. Monomer. [4Fe-4S] cluster is required as a cofactor.

Its subcellular location is the cytoplasm. It catalyses the reaction N(6)-dimethylallyladenosine(37) in tRNA + (sulfur carrier)-SH + AH2 + 2 S-adenosyl-L-methionine = 2-methylsulfanyl-N(6)-dimethylallyladenosine(37) in tRNA + (sulfur carrier)-H + 5'-deoxyadenosine + L-methionine + A + S-adenosyl-L-homocysteine + 2 H(+). Functionally, catalyzes the methylthiolation of N6-(dimethylallyl)adenosine (i(6)A), leading to the formation of 2-methylthio-N6-(dimethylallyl)adenosine (ms(2)i(6)A) at position 37 in tRNAs that read codons beginning with uridine. This is tRNA-2-methylthio-N(6)-dimethylallyladenosine synthase from Shewanella denitrificans (strain OS217 / ATCC BAA-1090 / DSM 15013).